Here is a 1071-residue protein sequence, read N- to C-terminus: Methionine S-methyltransferase (1071 aa).

An N-acetylalanine modification is found at alanine 2.

The protein belongs to the class I-like SAM-binding methyltransferase superfamily. As to quaternary structure, homotetramer. Expressed in roots, rosette leaves and cauline leaves. Expressed at a lower level in developing seeds.

The protein localises to the cytoplasm. It catalyses the reaction L-methionine + S-adenosyl-L-methionine = S-methyl-L-methionine + S-adenosyl-L-homocysteine. Its function is as follows. Catalyzes the S-methylmethionine (SMM) biosynthesis from adenosyl-L-homocysteine (AdoMet) and methionine. SMM biosynthesis (by MMT1) and degradation (by HMT-1, HMT-2 and HMT-3) constitute the SMM cycle in plants, which is probably required to achieve short term control of AdoMet level. Also able to catalyze the selenium-methylmethionine (SeMM) from AdoMet and selenium-methionine (SeMet). May play a role in phoem sulfur transport; such function is however not essential. This is Methionine S-methyltransferase (MMT1) from Arabidopsis thaliana (Mouse-ear cress).